Here is a 180-residue protein sequence, read N- to C-terminus: Acireductone dioxygenase 1 (180 aa).

Residues His-82, His-84, Glu-88, and His-127 each coordinate Fe(2+). Residues His-82, His-84, Glu-88, and His-127 each coordinate Ni(2+).

The protein belongs to the acireductone dioxygenase (ARD) family. The cofactor is Fe(2+). Requires Ni(2+) as cofactor.

The protein resides in the cytoplasm. It localises to the nucleus. The catalysed reaction is 1,2-dihydroxy-5-(methylsulfanyl)pent-1-en-3-one + O2 = 4-methylsulfanyl-2-oxobutanoate + formate + 2 H(+). The enzyme catalyses 1,2-dihydroxy-5-(methylsulfanyl)pent-1-en-3-one + O2 = 3-(methylsulfanyl)propanoate + CO + formate + 2 H(+). It participates in amino-acid biosynthesis; L-methionine biosynthesis via salvage pathway; L-methionine from S-methyl-5-thio-alpha-D-ribose 1-phosphate: step 5/6. Catalyzes 2 different reactions between oxygen and the acireductone 1,2-dihydroxy-3-keto-5-methylthiopentene (DHK-MTPene) depending upon the metal bound in the active site. Fe-containing acireductone dioxygenase (Fe-ARD) produces formate and 2-keto-4-methylthiobutyrate (KMTB), the alpha-ketoacid precursor of methionine in the methionine recycle pathway. Ni-containing acireductone dioxygenase (Ni-ARD) produces methylthiopropionate, carbon monoxide and formate, and does not lie on the methionine recycle pathway. The sequence is that of Acireductone dioxygenase 1 from Sorghum bicolor (Sorghum).